Consider the following 269-residue polypeptide: Cytochrome c oxidase subunit 3 (269 aa).

Residues 1-22 (MTHLERSRHQQHPFHMVMPSPW) lie on the Mitochondrial matrix side of the membrane. A helical transmembrane segment spans residues 23–41 (PIVVSFALLSLALSTALTM). The Mitochondrial intermembrane segment spans residues 42–48 (HGYIGNM). The helical transmembrane segment at 49–73 (NMVYLALFVLLTSSILWFRDIVAEA) threads the bilayer. At 74–80 (TYLGDHT) the chain is on the mitochondrial matrix side. Residues 81 to 114 (MAVRKGINLGFLMFVLSEVLIFAGLFWAYFHSAM) form a helical membrane-spanning segment. The Mitochondrial intermembrane portion of the chain corresponds to 115–137 (SPDVTLGACWPPVGIEAVQPTEL). Residues 138 to 161 (PLLNTIILLSSGATVTYSHHALIA) form a helical membrane-spanning segment. The Mitochondrial matrix portion of the chain corresponds to 162–164 (GNR). Residues 165–188 (NKALSGLLITFWLIVIFVTCQYIE) form a helical membrane-spanning segment. Residues 189–201 (YTNAAFTISDGVY) lie on the Mitochondrial intermembrane side of the membrane. The chain crosses the membrane as a helical span at residues 202–230 (GSVFYAGTGLHFLHMVMLAAMLGVNYWRM). Topologically, residues 231-248 (RNYHLTAGHHVGYETTII) are mitochondrial matrix. The helical transmembrane segment at 249–265 (YTHVLDVIWLFLYVVFY) threads the bilayer. At 266-269 (WWGV) the chain is on the mitochondrial intermembrane side.

This sequence belongs to the cytochrome c oxidase subunit 3 family. In terms of assembly, component of the cytochrome c oxidase (complex IV, CIV), a multisubunit enzyme composed of 12 subunits. The complex is composed of a catalytic core of 3 subunits COX1, COX2 and COX3, encoded in the mitochondrial DNA, and 9 supernumerary subunits COX4, COX5A (or COX5B), COX6, COX7, COX8, COX9, COX12, COX13 and COX26, which are encoded in the nuclear genome. The complex exists as a monomer or a dimer and forms supercomplexes (SCs) in the inner mitochondrial membrane with a dimer of ubiquinol-cytochrome c oxidoreductase (cytochrome b-c1 complex, complex III, CIII), resulting in 2 different assemblies (supercomplexes III(2)IV and III(2)IV(2)). Post-translationally, the N-terminus is blocked.

The protein localises to the mitochondrion inner membrane. The enzyme catalyses 4 Fe(II)-[cytochrome c] + O2 + 8 H(+)(in) = 4 Fe(III)-[cytochrome c] + 2 H2O + 4 H(+)(out). Functionally, component of the cytochrome c oxidase, the last enzyme in the mitochondrial electron transport chain which drives oxidative phosphorylation. The respiratory chain contains 3 multisubunit complexes succinate dehydrogenase (complex II, CII), ubiquinol-cytochrome c oxidoreductase (cytochrome b-c1 complex, complex III, CIII) and cytochrome c oxidase (complex IV, CIV), that cooperate to transfer electrons derived from NADH and succinate to molecular oxygen, creating an electrochemical gradient over the inner membrane that drives transmembrane transport and the ATP synthase. Cytochrome c oxidase is the component of the respiratory chain that catalyzes the reduction of oxygen to water. Electrons originating from reduced cytochrome c in the intermembrane space (IMS) are transferred via the dinuclear copper A center (CU(A)) of COX2 and heme A of COX1 to the active site in COX1, a binuclear center (BNC) formed by heme A3 and copper B (CU(B)). The BNC reduces molecular oxygen to 2 water molecules using 4 electrons from cytochrome c in the IMS and 4 protons from the mitochondrial matrix. COX3 is a catalytic core subunit. This chain is Cytochrome c oxidase subunit 3 (COX3), found in Saccharomyces cerevisiae (strain ATCC 204508 / S288c) (Baker's yeast).